The following is a 334-amino-acid chain: Regulatory protein E2 (334 aa).

The transactivation domain stretch occupies residues 1–127 (MYLCLESLQK…SKVLSPSVTS (127 aa)). A disordered region spans residues 127–240 (SSLRVGSTGG…SSTPKRQASS (114 aa)). A compositionally biased stretch (polar residues) spans 229–240 (GRSSTPKRQASS). Residues 251–334 (DPPVLLLQGA…SAVKGALDGL (84 aa)) form a DNA-binding domain region.

The protein belongs to the papillomaviridae E2 protein family. As to quaternary structure, binds DNA as homodimer. Interacts with protein E1; this interaction greatly increases E1 DNA-binding activity. Interacts with protein L1; this interaction enhances E2-dependent replication and transcription activation. Interacts with protein L2; this interaction inhibits E2 transcriptional activity but not DNA replication function E2. Interacts with protein E7; this interaction inhibits E7 oncogenic activity. Interacts with host TAF1; this interaction modulates E2-dependent transcriptional regulation. Interacts with host BRD4; this interaction mediates E2 transcriptional activation function. Additionally, the interaction with host BRD4 on mitotic chromosomes mediates tethering of the viral genome. Interacts with host TOPBP1; this interaction is required for optimal viral DNA replication. Phosphorylated.

It is found in the host nucleus. Plays a role in the initiation of viral DNA replication. A dimer of E2 interacts with a dimer of E1 in order to improve specificity of E1 DNA binding activity. Once the complex recognizes and binds DNA at specific sites, the E2 dimer is removed from DNA. E2 also regulates viral transcription through binding to the E2RE response element (5'-ACCNNNNNNGGT-3') present in multiple copies in the regulatory regions of the viral genome. Activates or represses transcription depending on E2RE's position with regards to proximal promoter elements including the TATA-box. Repression occurs by sterically hindering the assembly of the transcription initiation complex. In Bos taurus (Bovine), this protein is Regulatory protein E2.